The sequence spans 981 residues: Bifunctional glutamine synthetase adenylyltransferase/adenylyl-removing enzyme (981 aa).

The interval 1 to 473 (MTMPLPSIEQ…RSVFNNLIGF (473 aa)) is adenylyl removase. An adenylyl transferase region spans residues 479–981 (ADDSDNAWSD…HQIWQKLFFE (503 aa)).

The protein belongs to the GlnE family. It depends on Mg(2+) as a cofactor.

It carries out the reaction [glutamine synthetase]-O(4)-(5'-adenylyl)-L-tyrosine + phosphate = [glutamine synthetase]-L-tyrosine + ADP. The enzyme catalyses [glutamine synthetase]-L-tyrosine + ATP = [glutamine synthetase]-O(4)-(5'-adenylyl)-L-tyrosine + diphosphate. Its function is as follows. Involved in the regulation of glutamine synthetase GlnA, a key enzyme in the process to assimilate ammonia. When cellular nitrogen levels are high, the C-terminal adenylyl transferase (AT) inactivates GlnA by covalent transfer of an adenylyl group from ATP to specific tyrosine residue of GlnA, thus reducing its activity. Conversely, when nitrogen levels are low, the N-terminal adenylyl removase (AR) activates GlnA by removing the adenylyl group by phosphorolysis, increasing its activity. The regulatory region of GlnE binds the signal transduction protein PII (GlnB) which indicates the nitrogen status of the cell. The protein is Bifunctional glutamine synthetase adenylyltransferase/adenylyl-removing enzyme of Mannheimia succiniciproducens (strain KCTC 0769BP / MBEL55E).